Here is a 340-residue protein sequence, read N- to C-terminus: Central glycolytic genes regulator (340 aa).

The segment at residues 37-56 (RRSLSASLGISERVLRGEVQ) is a DNA-binding region (H-T-H motif). Beta-D-fructose 1,6-bisphosphate contacts are provided by residues 149–152 (GGTT), arginine 175, glutamine 185, 250–251 (RR), glutamate 269, and lysine 310.

The protein belongs to the SorC transcriptional regulatory family. Homotetramer. Binds primarily as a dimer to each half-site of the full-length operator, with much higher affinity for the right site. Then, both dimers interact, bridging the two-half sites of the operator region.

Stability and function are regulated by the effector molecule fructose-1,6-bisphosphate (FBP). In the presence of glucose, binding of FBP to the low-affinity sugar-binding site of CggR disrupts dimer/dimer bridging interactions and triggers a tetramer to dimer transition, which leaves two physically independent dimers on the target DNA and allows transcription of the downstream coding sequences by the RNA polymerase. In addition, FBP and several other phosphorylated compounds can bind to a high-affinity binding-site and protect CggR against aggregation and proteolysis. In the absence of glucose, represses the transcription of the gapA operon, which encodes five key glycolytic enzymes. Binds specifically to the cggR-gapA promoter region and blocks the progression of the RNA polymerase, leading to the arrest of the transcription. In Bacillus subtilis (strain 168), this protein is Central glycolytic genes regulator (cggR).